The primary structure comprises 294 residues: Nucleotide-binding protein Dtur_1129 (294 aa).

Glycine 10 to serine 17 contributes to the ATP binding site. Aspartate 61–threonine 64 contacts GTP.

Belongs to the RapZ-like family.

Its function is as follows. Displays ATPase and GTPase activities. The polypeptide is Nucleotide-binding protein Dtur_1129 (Dictyoglomus turgidum (strain DSM 6724 / Z-1310)).